A 100-amino-acid polypeptide reads, in one-letter code: MHLTSREQEKLMLFLAGELAAKRKARGVKLNYPETIAYIASHLQEAARDGMSVAEVMQYGSTLLTVDDVMEGVAEMVHEVQIEATFPDGTKLVTVHNPIR.

Belongs to the urease gamma subunit family. In terms of assembly, heterotrimer of UreA (gamma), UreB (beta) and UreC (alpha) subunits. Three heterotrimers associate to form the active enzyme.

It is found in the cytoplasm. The catalysed reaction is urea + 2 H2O + H(+) = hydrogencarbonate + 2 NH4(+). It participates in nitrogen metabolism; urea degradation; CO(2) and NH(3) from urea (urease route): step 1/1. This Haemophilus influenzae (strain PittEE) protein is Urease subunit gamma.